Here is a 357-residue protein sequence, read N- to C-terminus: Cinnamyl alcohol dehydrogenase 7 (357 aa).

Cys46 provides a ligand contact to Zn(2+). Thr48 provides a ligand contact to NADP(+). Residues His68, Glu69, Cys99, Cys102, Cys105, Cys113, and Cys162 each contribute to the Zn(2+) site. NADP(+)-binding positions include Thr166, 187–192, 210–215, Thr250, Gly274, and 297–299; these read GLGGLG, STSERK, and SMV.

It belongs to the zinc-containing alcohol dehydrogenase family. Homodimer. Zn(2+) is required as a cofactor. As to expression, expressed in the differentiation and elongation zones of primary and lateral roots. Expressed in the hypocotyl, cotyledon and leaf veins, hydathodes and trichomes. In stems, expressed in the vascular cambium region. Expressed in the style, anthers, stamen filaments, vascular tissues of sepals and stigmatic regions in flowers, and abscission, style and stigmatic regions of siliques and seed testa.

The catalysed reaction is (E)-cinnamyl alcohol + NADP(+) = (E)-cinnamaldehyde + NADPH + H(+). It participates in aromatic compound metabolism; phenylpropanoid biosynthesis. Its function is as follows. Involved in lignin biosynthesis. Catalyzes the final step specific for the production of lignin monomers. Catalyzes the NADPH-dependent reduction of coniferaldehyde, 5-hydroxyconiferaldehyde, sinapaldehyde, 4-coumaraldehyde and caffeyl aldehyde to their respective alcohols. The polypeptide is Cinnamyl alcohol dehydrogenase 7 (CAD7) (Arabidopsis thaliana (Mouse-ear cress)).